Consider the following 49-residue polypeptide: SPbeta prophage-derived uncharacterized protein YoqT (49 aa).

A helical membrane pass occupies residues cysteine 7–phenylalanine 29.

It is found in the cell membrane. This chain is SPbeta prophage-derived uncharacterized protein YoqT (yoqT), found in Bacillus subtilis (strain 168).